The chain runs to 241 residues: Ribonuclease PH (241 aa).

Phosphate-binding positions include Arg86 and 124-126 (GTR).

The protein belongs to the RNase PH family. Homohexameric ring arranged as a trimer of dimers.

It carries out the reaction tRNA(n+1) + phosphate = tRNA(n) + a ribonucleoside 5'-diphosphate. Functionally, phosphorolytic 3'-5' exoribonuclease that plays an important role in tRNA 3'-end maturation. Removes nucleotide residues following the 3'-CCA terminus of tRNAs; can also add nucleotides to the ends of RNA molecules by using nucleoside diphosphates as substrates, but this may not be physiologically important. Probably plays a role in initiation of 16S rRNA degradation (leading to ribosome degradation) during starvation. This chain is Ribonuclease PH, found in Hamiltonella defensa subsp. Acyrthosiphon pisum (strain 5AT).